Here is a 1118-residue protein sequence, read N- to C-terminus: Ubiquitin carboxyl-terminal hydrolase 8 (1118 aa).

In terms of domain architecture, MIT spans 33 to 116; it reads TKSYVHSALK…ESLKLRYEEA (84 aa). Basic and acidic residues-rich tracts occupy residues 120–146 and 158–177; these read KKLE…REDG and LDSK…KCET. The disordered stretch occupies residues 120 to 177; it reads KKLEEKDRQEEAQRLQQKRQETGREDGGTLAKGSLENVLDSKDKTQKSNGEKNEKCET. Ser-160 carries the post-translational modification Phosphoserine. In terms of domain architecture, Rhodanese spans 195–313; the sequence is KNISLIIMDA…WLLCYPQYTT (119 aa). A phosphoserine mark is found at Ser-392 and Ser-400. Positions 402-447 are disordered; it reads KNVPQIDRTKKPAVKLPEEHRIKSESTNHEQQSPQSGKVIPDRSTK. The SH3-binding motif lies at 405–413; that stretch reads PQIDRTKKP. The segment covering 417–429 has biased composition (basic and acidic residues); that stretch reads LPEEHRIKSESTN. Ser-452 bears the Phosphoserine mark. Residues 475–573 show a composition bias toward basic and acidic residues; that stretch reads KNKQEKELRE…AKKSVEDRGK (99 aa). Disordered stretches follow at residues 475 to 648 and 679 to 746; these read KNKQ…GRIV and YPPE…ENKP. Residue Thr-577 is modified to Phosphothreonine. A compositionally biased stretch (basic and acidic residues) spans 618 to 645; it reads TFREDTDDTERNKAQREPLTRARSEEMG. Polar residues predominate over residues 716–726; that stretch reads SYSSPDITQAI. Phosphoserine occurs at positions 718 and 719. Positions 777–1109 constitute a USP domain; the sequence is TGLRNLGNTC…AAYILFYTSL (333 aa). Residue Cys-786 is the Nucleophile of the active site. Thr-945 is modified (phosphothreonine). His-1067 functions as the Proton acceptor in the catalytic mechanism.

The protein belongs to the peptidase C19 family. In terms of assembly, forms a ternary complex with RNF128 and OTUB1. Interacts (via C-terminal UCH catalytic domain) with OTUB1 isoform 1. Interacts with STAM2 (via SH3 domain). Interacts with DNAJB3, EGFR, EPS15, RASGRF1, RNF41, YWHAE, YWHAG and YWHAZ. Interacts with NBR1, RASGRF1, RNF41 and IST1. Associates with the ESCRT-0 complex and with microtubules. Interacts with BIRC6/bruce and KIF23/MKLP1. (Microbial infection) Interacts with Zika virus non-structural protein 1. Phosphorylation of Ser-718 is essential for interaction with YWHAE and for cytosol localization. Undergoes dephosphorylation at Ser-718 in the M phase. Tyrosine-phosphorylated in its N-terminal half in an EGFR-dependent manner. Post-translationally, ubiquitinated. Inactive form is mostly monoubiquitinated, but polyubiquitination happens too. Ubiquitination is increased in EGF-stimulated cells. Ubiquitination of active form is undetectable, suggesting a possibility that USP8 deubiquitinates itself, thereby regulating its own function.

Its subcellular location is the cytoplasm. The protein localises to the nucleus. The protein resides in the endosome membrane. It localises to the cell membrane. It carries out the reaction Thiol-dependent hydrolysis of ester, thioester, amide, peptide and isopeptide bonds formed by the C-terminal Gly of ubiquitin (a 76-residue protein attached to proteins as an intracellular targeting signal).. Hydrolase that can remove conjugated ubiquitin from proteins and therefore plays an important regulatory role at the level of protein turnover by preventing degradation. Converts both 'Lys-48' an 'Lys-63'-linked ubiquitin chains. Catalytic activity is enhanced in the M phase. Involved in cell proliferation. Required to enter into S phase in response to serum stimulation. May regulate T-cell anergy mediated by RNF128 via the formation of a complex containing RNF128 and OTUB1. Probably regulates the stability of STAM2 and RASGRF1. Regulates endosomal ubiquitin dynamics, cargo sorting, membrane traffic at early endosomes, and maintenance of ESCRT-0 stability. The level of protein ubiquitination on endosomes is essential for maintaining the morphology of the organelle. Deubiquitinates EPS15 and controls tyrosine kinase stability. Removes conjugated ubiquitin from EGFR thus regulating EGFR degradation and downstream MAPK signaling. Involved in acrosome biogenesis through interaction with the spermatid ESCRT-0 complex and microtubules. Deubiquitinates BIRC6/bruce and KIF23/MKLP1. Deubiquitinates BACE1 which inhibits BACE1 lysosomal degradation and modulates BACE-mediated APP cleavage and amyloid-beta formation. The chain is Ubiquitin carboxyl-terminal hydrolase 8 from Homo sapiens (Human).